Here is a 40-residue protein sequence, read N- to C-terminus: Unknown protein from spot 207 of 2D-PAGE of etiolated coleoptile (40 aa).

It belongs to the GST superfamily. HSP26 family.

The sequence is that of Unknown protein from spot 207 of 2D-PAGE of etiolated coleoptile from Zea mays (Maize).